Consider the following 306-residue polypeptide: tRNA dimethylallyltransferase 2 (306 aa).

11 to 18 provides a ligand contact to ATP; sequence GPTASGKT. 13 to 18 is a binding site for substrate; the sequence is TASGKT. An interaction with substrate tRNA region spans residues 36–39; the sequence is DSRQ.

Belongs to the IPP transferase family. As to quaternary structure, monomer. The cofactor is Mg(2+).

It carries out the reaction adenosine(37) in tRNA + dimethylallyl diphosphate = N(6)-dimethylallyladenosine(37) in tRNA + diphosphate. Catalyzes the transfer of a dimethylallyl group onto the adenine at position 37 in tRNAs that read codons beginning with uridine, leading to the formation of N6-(dimethylallyl)adenosine (i(6)A). In Bacteroides thetaiotaomicron (strain ATCC 29148 / DSM 2079 / JCM 5827 / CCUG 10774 / NCTC 10582 / VPI-5482 / E50), this protein is tRNA dimethylallyltransferase 2.